The primary structure comprises 350 residues: Integrin beta-1-binding protein 2 (350 aa).

Cys-5, Cys-10, Cys-24, and His-27 together coordinate Zn(2+). Positions 5 to 64 (CYNKGCGQHFDPNTNLPDSCRYHPGVPIFHDALKGWSCCRKRTVDFSEFLNIKGCTVGLH) constitute a CHORD 1 domain. The SH3-binding signature appears at 28 to 31 (PGVP). Positions 42, 43, 59, and 64 each coordinate Zn(2+). The SH3-binding signature appears at 70–79 (PEVPPQPEGP). The tract at residues 72–92 (VPPQPEGPATSSLQEQKPLNT) is disordered. A compositionally biased stretch (polar residues) spans 80 to 92 (ATSSLQEQKPLNT). The Zn(2+) site is built by Cys-150 and Cys-155. Residues 150–209 (CQNPGCDAVYQGPESDATPCTYHPGAPRFHEGMKSWSCCGIQTLDFGAFLAQPGCRVGRH) enclose the CHORD 2 domain. Positions 159 to 162 (YQGP) match the SH2-binding motif. Zn(2+) contacts are provided by Cys-169 and His-172. The short motif at 173 to 176 (PGAP) is the SH3-binding element. Residues Cys-187, Cys-188, Cys-204, and His-209 each coordinate Zn(2+). One can recognise a CS domain in the interval 216–305 (PASCRHDWHQ…ADPGSWAQLE (90 aa)). An SH2-binding motif is present at residues 235–238 (YGQI). The tract at residues 317-350 (GVLLEMDEEESEDSDDDLSWTEEEDEEEEEAMGE) is disordered. The segment covering 321–350 (EMDEEESEDSDDDLSWTEEEDEEEEEAMGE) has biased composition (acidic residues).

In terms of assembly, interacts with beta-1 integrin subunit. This interaction is regulated by divalent cations, and it occurs only in absence of calcium. Expressed in skeletal and cardiac muscles but not in other tissues. Is localized in rows flanking the Z line containing alpha-actinin.

Functionally, may play a role during maturation and/or organization of muscles cells. The protein is Integrin beta-1-binding protein 2 (Itgb1bp2) of Mus musculus (Mouse).